The primary structure comprises 198 residues: Methyl-coenzyme M reductase I operon protein C (198 aa).

In terms of assembly, MCR is composed of three subunits: alpha, beta, and gamma. The function of proteins C and D is not known.

This Methanothermobacter marburgensis (strain ATCC BAA-927 / DSM 2133 / JCM 14651 / NBRC 100331 / OCM 82 / Marburg) (Methanobacterium thermoautotrophicum) protein is Methyl-coenzyme M reductase I operon protein C (mcrC).